The following is a 597-amino-acid chain: Sodium/mannose cotransporter SLC5A10 (597 aa).

The Extracellular segment spans residues 1–16; it reads MVADNSTSDPHAPGPQ. N-linked (GlcNAc...) asparagine glycosylation is present at N5. Residues 17-37 form a helical membrane-spanning segment; that stretch reads LSVTDIVVITVYFALNVAVGI. Residues 38-73 lie on the Cytoplasmic side of the membrane; it reads WSSCRASRNTVSGYFLAGRDMTWWPIGASLFGSSEG. S49 is modified (phosphoserine). Residues 74-94 traverse the membrane as a helical segment; it reads SGLFIGLAGSGAAGGLAVAGF. The Extracellular portion of the chain corresponds to 95 to 100; it reads DWNATY. Residues 101–121 traverse the membrane as a helical segment; sequence VLLALAWVFGAIYISSEIVTL. The Cytoplasmic portion of the chain corresponds to 122–137; that stretch reads AEYIQKRFGGQRIRMY. The chain crosses the membrane as a helical span at residues 138 to 158; it reads LSVLSLLLSVFTKISLDLYAG. Residues 159–171 lie on the Extracellular side of the membrane; the sequence is ALFVHICLGWNFY. A helical transmembrane segment spans residues 172-194; it reads LSTILTLTITALYTITGGLVAVI. Over 195–200 the chain is Cytoplasmic; it reads YTDALQ. The chain crosses the membrane as a helical span at residues 201–219; that stretch reads TLIMVVGAVILAIKAFHQI. The Extracellular segment spans residues 220-265; sequence DGYGQMEAAYARAIPSRTVANTTCHLPRADAMHMFRDPYTGDLPWT. Residues 266 to 286 form a helical membrane-spanning segment; sequence GMTFGLTIMATWYWCTDQVIV. At 287 to 301 the chain is on the cytoplasmic side; it reads QRSLSARNLNHAKAG. Residues 302–322 form a helical membrane-spanning segment; the sequence is SILASYLKMLPMGLMIMPGMI. The Extracellular segment spans residues 323-367; sequence SRALFPDEVGCVVPSECLRACGAEIGCSNIAYPKLVMELMPVGLR. Residues 368-390 traverse the membrane as a helical segment; it reads GLMIAVMMPALMSSLSSIFNSSS. Over 391–410 the chain is Cytoplasmic; it reads TLFTMDIWRRLRPCASEREL. The chain crosses the membrane as a helical span at residues 411–431; that stretch reads LLVGRLVIVVLIGVSVAWIPV. At 432–444 the chain is on the extracellular side; sequence LQGSNGGQLFIYM. A helical transmembrane segment spans residues 445–465; sequence QSVTSSLAPPVTAVFTLGIFW. Over 466–472 the chain is Cytoplasmic; the sequence is QRANEQG. Residues 473–493 form a helical membrane-spanning segment; that stretch reads AFWGLLAGLAVGATRLVLEFL. Over 494–514 the chain is Extracellular; that stretch reads HPAPPCGAADTRPAVLSQLHY. Residues 515–535 traverse the membrane as a helical segment; it reads LHFAVALFVLTGAVAVGGSLL. The Cytoplasmic portion of the chain corresponds to 536–576; that stretch reads TPPPRRHQIENLTWWTLTRDLSLGAKAGDGQTPQRYTFWAR. A helical membrane pass occupies residues 577 to 597; sequence VCGFNAILLMCVNIFFYAYFA.

The protein belongs to the sodium:solute symporter (SSF) (TC 2.A.21) family. Expressed only in kidney.

It localises to the apical cell membrane. It carries out the reaction D-mannose(out) + Na(+)(out) = D-mannose(in) + Na(+)(in). The enzyme catalyses D-fructopyranose(out) + Na(+)(out) = D-fructopyranose(in) + Na(+)(in). In terms of biological role, electrogenic Na+-coupled sugar symporter that actively transports D-mannose or D-fructose at the plasma membrane, with a Na+ to sugar coupling ratio of 1:1. Transporter activity is driven by a transmembrane Na+ electrochemical gradient set by the Na+/K+ pump. Exclusively recognizes sugar substrates having a pyranose ring with an axial hydroxyl group on carbon 2. Has likely evolved to enable renal reabsorption of D-mannose, an important constituent of oligosaccharide chains of glycoproteins. Contributes to dietary D-fructose reabsorption from glomerular filtrate across the brush border of the kidney. The protein is Sodium/mannose cotransporter SLC5A10 (SLC5A10) of Oryctolagus cuniculus (Rabbit).